Reading from the N-terminus, the 72-residue chain is Translation initiation factor IF-1 (72 aa).

Residues 1 to 72 enclose the S1-like domain; it reads MAKEDAIELQ…SKGRIVFRAR (72 aa).

This sequence belongs to the IF-1 family. As to quaternary structure, component of the 30S ribosomal translation pre-initiation complex which assembles on the 30S ribosome in the order IF-2 and IF-3, IF-1 and N-formylmethionyl-tRNA(fMet); mRNA recruitment can occur at any time during PIC assembly.

It localises to the cytoplasm. One of the essential components for the initiation of protein synthesis. Stabilizes the binding of IF-2 and IF-3 on the 30S subunit to which N-formylmethionyl-tRNA(fMet) subsequently binds. Helps modulate mRNA selection, yielding the 30S pre-initiation complex (PIC). Upon addition of the 50S ribosomal subunit IF-1, IF-2 and IF-3 are released leaving the mature 70S translation initiation complex. The protein is Translation initiation factor IF-1 of Aliivibrio fischeri (strain ATCC 700601 / ES114) (Vibrio fischeri).